Here is a 177-residue protein sequence, read N- to C-terminus: Small ribosomal subunit protein uS4 (177 aa).

The region spanning 104 to 166 (RRLQTIVYKK…PTSPFKQHPP (63 aa)) is the S4 RNA-binding domain. Positions 158 to 177 (TSPFKQHPPTQQGEENVQQA) are disordered. Polar residues predominate over residues 165-177 (PPTQQGEENVQQA).

This sequence belongs to the universal ribosomal protein uS4 family. As to quaternary structure, part of the 30S ribosomal subunit. Contacts protein S5. The interaction surface between S4 and S5 is involved in control of translational fidelity.

Functionally, one of the primary rRNA binding proteins, it binds directly to 16S rRNA where it nucleates assembly of the body of the 30S subunit. In terms of biological role, with S5 and S12 plays an important role in translational accuracy. This chain is Small ribosomal subunit protein uS4, found in Sulfurisphaera tokodaii (strain DSM 16993 / JCM 10545 / NBRC 100140 / 7) (Sulfolobus tokodaii).